The sequence spans 92 residues: Large ribosomal subunit protein uL23c (92 aa).

This sequence belongs to the universal ribosomal protein uL23 family. As to quaternary structure, part of the 50S ribosomal subunit.

The protein localises to the plastid. It is found in the chloroplast. In terms of biological role, binds to 23S rRNA. This chain is Large ribosomal subunit protein uL23c (rpl23), found in Chara vulgaris (Common stonewort).